Here is a 310-residue protein sequence, read N- to C-terminus: MGKRMSLILGAFLSVFLLVACSSTGTKTAKSDKLKVVATNSIIADMTKAIAGDKIDLHSIVPIGQDPHEYEPLPEDVEKTSNADVIFYNGINLEDGGQAWFTKLVKNAQKTKNKDYFAVSDGIDVIYLEGASEKGKEDPHAWLNLENGIIYSKNIAKQLIAKDPKNKETYEKNLKAYVAKLEKLDKEAKSKFDAIAENKKLIVTSEGCFKYFSKAYGVPSAYIWEINTEEEGTPDQISSLIEKLKVIKPSALFVESSVDRRPMETVSKDSGIPIYSEIFTDSIAKKGKPGDSYYAMMKWNLDKISEGLAK.

Residues 1–20 form the signal peptide; it reads MGKRMSLILGAFLSVFLLVA. Cys-21 carries the N-palmitoyl cysteine lipid modification. The S-diacylglycerol cysteine moiety is linked to residue Cys-21. Fe(2+)-binding residues include His-68, His-140, Glu-206, and Asp-281.

This sequence belongs to the bacterial solute-binding protein 9 family. Lipoprotein receptor antigen (Lrai) subfamily.

Its subcellular location is the cell membrane. Part of the ATP-binding cassette (ABC) transport system MtsABC involved in iron import. Binds iron with high affinity and specificity and delivers it to the membrane permease for translocation into the cytoplasm. Has low affinity for Zn(2+) and Cu(2+). This Streptococcus pyogenes serotype M1 protein is Iron ABC transporter substrate-binding lipoprotein MtsA (mtsA).